The following is a 315-amino-acid chain: UDP-N-acetylenolpyruvoylglucosamine reductase (315 aa).

The FAD-binding PCMH-type domain maps to 27–207 (RVGGPADVLY…TKRMNAITAR (181 aa)). R172 is a catalytic residue. The segment at 214-236 (IREKTSGSTFANPDPPGTPNQRK) is disordered. Catalysis depends on S221, which acts as the Proton donor. Residue E297 is part of the active site.

Belongs to the MurB family. FAD is required as a cofactor.

The protein localises to the cytoplasm. It carries out the reaction UDP-N-acetyl-alpha-D-muramate + NADP(+) = UDP-N-acetyl-3-O-(1-carboxyvinyl)-alpha-D-glucosamine + NADPH + H(+). The protein operates within cell wall biogenesis; peptidoglycan biosynthesis. Cell wall formation. The sequence is that of UDP-N-acetylenolpyruvoylglucosamine reductase from Maricaulis maris (strain MCS10) (Caulobacter maris).